The primary structure comprises 688 residues: Complement C1s-1 subcomponent (688 aa).

Positions 1–15 are cleaved as a signal peptide; sequence MWYLVLFSLLASFSA. Residues 16 to 130 enclose the CUB 1 domain; it reads EPTMHGEILS…TGFAAYYTAI (115 aa). Glu-60, Asp-68, Asp-113, Asp-131, Val-132, and Glu-134 together coordinate Ca(2+). Cysteines 65 and 83 form a disulfide. Residues 131-172 enclose the EGF-like; calcium-binding domain; sequence DVNECTDFTDVPCSHFCNNFIGGYFCSCPPEYFLHDDMRNCG. Intrachain disulfides connect Cys-135/Cys-147, Cys-143/Cys-156, and Cys-158/Cys-171. Residues Asn-149, Phe-150, and Gly-153 each coordinate Ca(2+). (3R)-3-hydroxyasparagine is present on Asn-149. N-linked (GlcNAc...) asparagine glycosylation occurs at Asn-174. A disulfide bridge links Cys-175 with Cys-202. In terms of domain architecture, CUB 2 spans 175–290; sequence CSGDVFTALI…KGWKLRYHGD (116 aa). Ca(2+) is bound by residues Glu-226, Asp-236, Asp-275, Gly-278, and Gln-279. Cysteines 234 and 251 form a disulfide. Sushi domains follow at residues 292-356 and 357-423; these read ISCP…KCQP and VYCG…RCIP. Intrachain disulfides connect Cys-294-Cys-341, Cys-321-Cys-354, Cys-359-Cys-403, Cys-386-Cys-421, Cys-425-Cys-549, Cys-595-Cys-618, and Cys-627-Cys-659. Positions 438 to 680 constitute a Peptidase S1 domain; sequence IFGGQPAKIE…YVDWILKTMQ (243 aa). Residues His-475 and Asp-529 each act as charge relay system in the active site. The Charge relay system role is filled by Ser-631.

The protein belongs to the peptidase S1 family. As to quaternary structure, core component of the complement C1 complex, a calcium-dependent complex composed of 1 molecule of the C1Q subcomplex, 2 molecules of C1R and 2 molecules of C1S. The C1Q subcomplex is composed 18 subunits: 3 chains of C1QA, C1QB, and C1QC trimerize to form 6 collagen-like triple helices connected to six globular ligand-recognition modules. Post-translationally, cleaved and activated by C1R to generate Complement C1s subcomponent heavy and light chains. The iron and 2-oxoglutarate dependent 3-hydroxylation of aspartate and asparagine is (R) stereospecific within EGF domains. Specifically expressed in male reproductive tissues.

The protein resides in the secreted. The protein localises to the cell surface. It carries out the reaction Cleavage of Arg-|-Ala bond in complement component C4 to form C4a and C4b, and Lys(or Arg)-|-Lys bond in complement component C2 to form C2a and C2b: the 'classical' pathway C3 convertase.. With respect to regulation, cleaved and activated by C1R. Immunoglobulin-binding promotes autoactivation of C1R, which results in the cleavage of the Arg-Ile bond in the catalytic domain. Inhibited by C1 inhibitor (SERPING1). Component of the complement C1 complex, a multiprotein complex that initiates the classical pathway of the complement system, a cascade of proteins that leads to phagocytosis and breakdown of pathogens and signaling that strengthens the adaptive immune system. C1S is activated following association of the C1 complex with immunoglobulins (IgG or IgM) complexed with antigens to form antigen-antibody complexes on the surface of pathogens. C1S is cleaved and activated by C1R to generate C1s subcomponent heavy and light chains. C1s subcomponent light chain then cleaves and activates C2 and C4, the next components of the classical complement pathway. Its function is as follows. Serine protease component of the complement C1 complex, which catalyzes cleavage and activation of C2 and C4, the next components of the classical complement pathway. Also cleaves IGFBP5 and thereby inhibits the trophic effects of IGF1. The chain is Complement C1s-1 subcomponent from Mus musculus (Mouse).